The sequence spans 67 residues: Sec-independent protein translocase protein TatA (67 aa).

The chain crosses the membrane as a helical span at residues methionine 1–glycine 21.

This sequence belongs to the TatA/E family. In terms of assembly, forms a complex with TatC.

Its subcellular location is the cell inner membrane. Its function is as follows. Part of the twin-arginine translocation (Tat) system that transports large folded proteins containing a characteristic twin-arginine motif in their signal peptide across membranes. TatA could form the protein-conducting channel of the Tat system. This is Sec-independent protein translocase protein TatA from Chlorobaculum tepidum (strain ATCC 49652 / DSM 12025 / NBRC 103806 / TLS) (Chlorobium tepidum).